We begin with the raw amino-acid sequence, 265 residues long: Small ribosomal subunit protein uS5 (265 aa).

Low complexity predominate over residues 1-15 (MADTQPAQEAPAADA). The interval 1–44 (MADTQPAQEAPAADAPRAERNFGRGRGGRGGRGRGRGGPGEEKE) is disordered. Residues 26–35 (RGGRGGRGRG) are compositionally biased toward basic residues. The S5 DRBM domain maps to 88–151 (LHDEMMKIYP…IAAKLNIVPV (64 aa)). Residues 245 to 265 (TEPSRDPTDEHGELLAEMTTA) form a disordered region. Residues 246–258 (EPSRDPTDEHGEL) show a composition bias toward basic and acidic residues.

It belongs to the universal ribosomal protein uS5 family.

Component of the ribosome, a large ribonucleoprotein complex responsible for the synthesis of proteins in the cell. The small ribosomal subunit (SSU) binds messenger RNAs (mRNAs) and translates the encoded message by selecting cognate aminoacyl-transfer RNA (tRNA) molecules. The large subunit (LSU) contains the ribosomal catalytic site termed the peptidyl transferase center (PTC), which catalyzes the formation of peptide bonds, thereby polymerizing the amino acids delivered by tRNAs into a polypeptide chain. The nascent polypeptides leave the ribosome through a tunnel in the LSU and interact with protein factors that function in enzymatic processing, targeting, and the membrane insertion of nascent chains at the exit of the ribosomal tunnel. Plays a role in the assembly and function of the 40S ribosomal subunit. Mutations in this protein affects the control of translational fidelity. Involved in nucleolar processing of pre-18S ribosomal RNA and ribosome assembly. The protein is Small ribosomal subunit protein uS5 of Leishmania amazonensis.